The following is an 85-amino-acid chain: Progonadoliberin-2 (85 aa).

The signal sequence occupies residues 1-23 (MCVSRLVLLFGLLLCVGAQLSNA). At Q24 the chain carries Pyrrolidone carboxylic acid. Residue G33 is modified to Glycine amide.

Belongs to the GnRH family.

Its subcellular location is the secreted. In terms of biological role, stimulates the secretion of gonadotropins. In Dicentrarchus labrax (European seabass), this protein is Progonadoliberin-2 (gnrh2).